The chain runs to 518 residues: Glutamate--cysteine ligase (518 aa).

This sequence belongs to the glutamate--cysteine ligase type 1 family. Type 1 subfamily.

It catalyses the reaction L-cysteine + L-glutamate + ATP = gamma-L-glutamyl-L-cysteine + ADP + phosphate + H(+). Its pathway is sulfur metabolism; glutathione biosynthesis; glutathione from L-cysteine and L-glutamate: step 1/2. This is Glutamate--cysteine ligase from Shigella sonnei (strain Ss046).